A 908-amino-acid chain; its full sequence is E3 ubiquitin-protein ligase ZNF598 (908 aa).

An RING-type zinc finger spans residues 27–67; it reads CVLCCGDLEATALGRCDHPVCYRCSTKMRVLCEQRYCAVCR. Residues 185 to 208 form a C2H2-type zinc finger; the sequence is PLCKFCDERYLDNDELLKHLRRDH. Disordered stretches follow at residues 292–338, 350–441, 467–557, 569–619, and 719–744; these read SRRS…KREE, SVAA…EEDF, PGPP…TVQG, SLLA…LEAP, and PSSHSACAPSPTTTTTTTTTTKTPGL. Position 295 is a phosphoserine (S295). A Phosphotyrosine modification is found at Y304. Residues 313–329 are compositionally biased toward low complexity; the sequence is QGRAGRASGRGAQQNRR. A compositionally biased stretch (basic and acidic residues) spans 358–385; sequence ETQRVEDREEGSRPKKEEAAARVPEEPR. A Phosphoserine modification is found at S433. Low complexity predominate over residues 482-501; sequence PALVSSAPKPSSAPSSLISA. Over residues 529 to 538 the composition is skewed to basic residues; sequence KAGKGSRGGR.

This sequence belongs to the ZNF598/HEL2 family. In terms of assembly, interacts with the E2 ubiquitin-conjugating enzyme UBE2D3. Component of the 4EHP-GYF2 complex, at least composed of EIF4E2, GIGYF2 and ZNF598.

The protein localises to the cytoplasm. The protein resides in the cytosol. The enzyme catalyses S-ubiquitinyl-[E2 ubiquitin-conjugating enzyme]-L-cysteine + [acceptor protein]-L-lysine = [E2 ubiquitin-conjugating enzyme]-L-cysteine + N(6)-ubiquitinyl-[acceptor protein]-L-lysine.. It participates in protein modification; protein ubiquitination. E3 ubiquitin-protein ligase that plays a key role in the ribosome quality control (RQC), a pathway that takes place when a ribosome has stalled during translation, leading to degradation of nascent peptide chains. ZNF598 is activated when ribosomes are stalled within an mRNA following translation of prematurely polyadenylated mRNAs. Acts as a ribosome collision sensor: specifically recognizes and binds collided di-ribosome, which arises when a trailing ribosome encounters a slower leading ribosome, leading to terminally arrest translation. Following binding to colliding ribosomes, mediates monoubiquitination of 40S ribosomal proteins RPS10/eS10 and RPS3/uS3, and 'Lys-63'-linked polyubiquitination of RPS20/uS10. Polyubiquitination of RPS20/uS10 promotes recruitment of the RQT (ribosome quality control trigger) complex, which drives the disassembly of stalled ribosomes, followed by degradation of nascent peptides. E3 ubiquitin-protein ligase activity is dependent on the E2 ubiquitin-conjugating enzyme UBE2D3. Also acts as an adapter that recruits the 4EHP-GYF2 complex to mRNAs. Independently of its role in RQC, may also act as a negative regulator of interferon-stimulated gene (ISG) expression. This is E3 ubiquitin-protein ligase ZNF598 from Mus musculus (Mouse).